The sequence spans 200 residues: Protein GrpE (200 aa).

The segment covering 1-23 has biased composition (acidic residues); the sequence is MEEEIKETSEDKEEENTEAEAVE. The disordered stretch occupies residues 1–39; sequence MEEEIKETSEDKEEENTEAEAVENNEKSEENAGNVEEDE.

This sequence belongs to the GrpE family. In terms of assembly, homodimer.

It is found in the cytoplasm. Its function is as follows. Participates actively in the response to hyperosmotic and heat shock by preventing the aggregation of stress-denatured proteins, in association with DnaK and GrpE. It is the nucleotide exchange factor for DnaK and may function as a thermosensor. Unfolded proteins bind initially to DnaJ; upon interaction with the DnaJ-bound protein, DnaK hydrolyzes its bound ATP, resulting in the formation of a stable complex. GrpE releases ADP from DnaK; ATP binding to DnaK triggers the release of the substrate protein, thus completing the reaction cycle. Several rounds of ATP-dependent interactions between DnaJ, DnaK and GrpE are required for fully efficient folding. This chain is Protein GrpE, found in Brachyspira hyodysenteriae (strain ATCC 49526 / WA1).